The primary structure comprises 100 residues: Small ribosomal subunit protein uS14 (100 aa).

Belongs to the universal ribosomal protein uS14 family. As to quaternary structure, part of the 30S ribosomal subunit. Contacts proteins S3 and S10.

In terms of biological role, binds 16S rRNA, required for the assembly of 30S particles and may also be responsible for determining the conformation of the 16S rRNA at the A site. This is Small ribosomal subunit protein uS14 from Synechococcus sp. (strain CC9311).